The chain runs to 311 residues: L-lactate dehydrogenase 2 (311 aa).

NAD(+) is bound by residues Val14, Asp35, and Arg40. A substrate-binding site is contributed by Arg90. Residues Ser103, 120–122 (ATN), and Thr145 contribute to the NAD(+) site. 122-125 (NPCD) serves as a coordination point for substrate. 150–153 (DTTR) is a binding site for substrate. His177 acts as the Proton acceptor in catalysis. Thr230 is a binding site for substrate.

It belongs to the LDH/MDH superfamily. LDH family. As to quaternary structure, homotetramer.

The protein localises to the cytoplasm. It carries out the reaction (S)-lactate + NAD(+) = pyruvate + NADH + H(+). The protein operates within fermentation; pyruvate fermentation to lactate; (S)-lactate from pyruvate: step 1/1. Functionally, catalyzes the conversion of lactate to pyruvate. The chain is L-lactate dehydrogenase 2 from Listeria innocua serovar 6a (strain ATCC BAA-680 / CLIP 11262).